A 147-amino-acid chain; its full sequence is Large ribosomal subunit protein uL11 (147 aa).

The protein belongs to the universal ribosomal protein uL11 family. In terms of assembly, part of the ribosomal stalk of the 50S ribosomal subunit. Interacts with L10 and the large rRNA to form the base of the stalk. L10 forms an elongated spine to which L12 dimers bind in a sequential fashion forming a multimeric L10(L12)X complex. One or more lysine residues are methylated.

Its function is as follows. Forms part of the ribosomal stalk which helps the ribosome interact with GTP-bound translation factors. The protein is Large ribosomal subunit protein uL11 of Metamycoplasma arthritidis (strain 158L3-1) (Mycoplasma arthritidis).